The chain runs to 590 residues: KNR4/SMI1 homolog 2 (590 aa).

3 disordered regions span residues Ser59–Asn97, Phe216–Gly239, and Thr407–Leu590. A compositionally biased stretch (polar residues) spans Gly71–Val85. A compositionally biased stretch (low complexity) spans Gln217–Gln226. A compositionally biased stretch (polar residues) spans Pro430–Lys454. 2 stretches are compositionally biased toward basic and acidic residues: residues Pro470–Ser481 and Glu489–Asp515. The span at Asp516–Lys528 shows a compositional bias: acidic residues. The segment covering Thr554–Gln568 has biased composition (basic residues). Over residues Asn576 to Leu590 the composition is skewed to acidic residues.

Belongs to the KNR4/SMI1 family.

This chain is KNR4/SMI1 homolog 2, found in Debaryomyces hansenii (strain ATCC 36239 / CBS 767 / BCRC 21394 / JCM 1990 / NBRC 0083 / IGC 2968) (Yeast).